Reading from the N-terminus, the 340-residue chain is 4-hydroxy-2-oxovalerate aldolase (340 aa).

The 251-residue stretch at 5–255 (IVITEVALRD…QTGVDLYKMM (251 aa)) folds into the Pyruvate carboxyltransferase domain. 13-14 (RD) is a substrate binding site. Mn(2+) is bound at residue aspartate 14. The Proton acceptor role is filled by histidine 17. The substrate site is built by serine 167 and histidine 194. Positions 194 and 196 each coordinate Mn(2+). Tyrosine 285 serves as a coordination point for substrate.

This sequence belongs to the 4-hydroxy-2-oxovalerate aldolase family.

It carries out the reaction (S)-4-hydroxy-2-oxopentanoate = acetaldehyde + pyruvate. The chain is 4-hydroxy-2-oxovalerate aldolase from Brevibacillus brevis (strain 47 / JCM 6285 / NBRC 100599).